A 478-amino-acid polypeptide reads, in one-letter code: Sedoheptulokinase (478 aa).

Belongs to the FGGY kinase family. As to expression, strongly expressed in liver, kidney and pancreas. Expressed at lower levels in placenta and heart. Very weakly expressed in lung and brain.

Its subcellular location is the cytoplasm. The catalysed reaction is sedoheptulose + ATP = D-sedoheptulose 7-phosphate + ADP + H(+). Its function is as follows. Acts as a modulator of macrophage activation through control of glucose metabolism. The sequence is that of Sedoheptulokinase from Homo sapiens (Human).